The following is a 432-amino-acid chain: UPF0597 protein APL_1605 (432 aa).

It belongs to the UPF0597 family.

This chain is UPF0597 protein APL_1605, found in Actinobacillus pleuropneumoniae serotype 5b (strain L20).